Reading from the N-terminus, the 238-residue chain is Ribonuclease PH (238 aa).

Phosphate-binding positions include R86 and 124–126 (GTR).

Belongs to the RNase PH family. In terms of assembly, homohexameric ring arranged as a trimer of dimers.

The catalysed reaction is tRNA(n+1) + phosphate = tRNA(n) + a ribonucleoside 5'-diphosphate. Functionally, phosphorolytic 3'-5' exoribonuclease that plays an important role in tRNA 3'-end maturation. Removes nucleotide residues following the 3'-CCA terminus of tRNAs; can also add nucleotides to the ends of RNA molecules by using nucleoside diphosphates as substrates, but this may not be physiologically important. Probably plays a role in initiation of 16S rRNA degradation (leading to ribosome degradation) during starvation. This is Ribonuclease PH from Azorhizobium caulinodans (strain ATCC 43989 / DSM 5975 / JCM 20966 / LMG 6465 / NBRC 14845 / NCIMB 13405 / ORS 571).